The chain runs to 261 residues: Phosphatidylglycerol--prolipoprotein diacylglyceryl transferase (261 aa).

Transmembrane regions (helical) follow at residues Val19–Tyr39, Leu56–Tyr76, Trp92–Phe112, Phe126–Gly146, Gln173–Ala193, Phe199–Phe219, and Gly227–Ile247. Residue Arg139 participates in a 1,2-diacyl-sn-glycero-3-phospho-(1'-sn-glycerol) binding.

Belongs to the Lgt family.

The protein resides in the cell inner membrane. It carries out the reaction L-cysteinyl-[prolipoprotein] + a 1,2-diacyl-sn-glycero-3-phospho-(1'-sn-glycerol) = an S-1,2-diacyl-sn-glyceryl-L-cysteinyl-[prolipoprotein] + sn-glycerol 1-phosphate + H(+). Its pathway is protein modification; lipoprotein biosynthesis (diacylglyceryl transfer). In terms of biological role, catalyzes the transfer of the diacylglyceryl group from phosphatidylglycerol to the sulfhydryl group of the N-terminal cysteine of a prolipoprotein, the first step in the formation of mature lipoproteins. This is Phosphatidylglycerol--prolipoprotein diacylglyceryl transferase from Coxiella burnetii (strain Dugway 5J108-111).